The chain runs to 673 residues: Probable multidrug resistance ABC transporter ATP-binding/permease protein YheH (673 aa).

Transmembrane regions (helical) follow at residues 18 to 38, 146 to 166, 223 to 243, 245 to 265, and 347 to 367; these read LITA…GPFI, IKGM…SVFF, LYVT…GIFT, LFLL…IIWL, and LAFV…AGIV. The ABC transmembrane type-1 domain occupies 18–398; it reads LITAVLLLTV…IVNQFSKLEL (381 aa). An ABC transporter domain is found at 430 to 664; that stretch reads VEFRDVSFAY…EGQYYQMYEL (235 aa). ATP is bound at residue 463 to 470; sequence GHTGSGKS.

The protein belongs to the ABC transporter superfamily. In terms of assembly, heterodimer composed of YheH and YheI.

It localises to the cell membrane. With respect to regulation, inhibited by ortho-vanadate. Involved in the transport of four structurally unrelated drugs, including doxorubicin and mitoxantrone. Transmembrane domains (TMD) form a pore in the membrane and the ATP-binding domain (NBD) is responsible for energy generation. The polypeptide is Probable multidrug resistance ABC transporter ATP-binding/permease protein YheH (yheH) (Bacillus subtilis (strain 168)).